A 385-amino-acid polypeptide reads, in one-letter code: tRNA-specific 2-thiouridylase MnmA (385 aa).

ATP-binding positions include 30 to 37 and Met56; that span reads GMSGGVDS. The segment at 118–120 is interaction with target base in tRNA; it reads NPD. Residue Cys123 is the Nucleophile of the active site. A disulfide bridge connects residues Cys123 and Cys220. Gly148 lines the ATP pocket. An interaction with tRNA region spans residues 170-172; that stretch reads KDQ. Catalysis depends on Cys220, which acts as the Cysteine persulfide intermediate. Residues 332–333 form an interaction with tRNA region; it reads RY.

It belongs to the MnmA/TRMU family.

The protein resides in the cytoplasm. It catalyses the reaction S-sulfanyl-L-cysteinyl-[protein] + uridine(34) in tRNA + AH2 + ATP = 2-thiouridine(34) in tRNA + L-cysteinyl-[protein] + A + AMP + diphosphate + H(+). In terms of biological role, catalyzes the 2-thiolation of uridine at the wobble position (U34) of tRNA, leading to the formation of s(2)U34. The protein is tRNA-specific 2-thiouridylase MnmA of Haemophilus influenzae (strain PittGG).